The chain runs to 162 residues: Nucleotide-binding protein A2cp1_0112 (162 aa).

Belongs to the YajQ family.

In terms of biological role, nucleotide-binding protein. The protein is Nucleotide-binding protein A2cp1_0112 of Anaeromyxobacter dehalogenans (strain 2CP-1 / ATCC BAA-258).